Reading from the N-terminus, the 373-residue chain is Saccharopine dehydrogenase [NAD(+), L-lysine-forming] (373 aa).

Ala-2 carries the post-translational modification N-acetylalanine; partial. Positions 18 and 77 each coordinate L-saccharopine. Lys-77 functions as the Proton acceptor in the catalytic mechanism. The active-site Proton donor is the His-96. An L-saccharopine-binding site is contributed by Gln-101. Arg-130 lines the NAD(+) pocket. Arg-131 and Phe-135 together coordinate L-saccharopine. NAD(+)-binding positions include 203–204, Asp-227, Thr-231, Tyr-251, and Val-278; that span reads GR. A disulfide bridge links Cys-205 with Cys-249. 279 to 281 is an L-saccharopine binding site; the sequence is SAD. Residue 318–321 coordinates NAD(+); the sequence is IDHL. The short motif at 371–373 is the Microbody targeting signal element; that stretch reads SRL.

It belongs to the AlaDH/PNT family. Monomer.

It localises to the peroxisome. The enzyme catalyses L-saccharopine + NAD(+) + H2O = L-lysine + 2-oxoglutarate + NADH + H(+). The protein operates within amino-acid biosynthesis; L-lysine biosynthesis via AAA pathway; L-lysine from L-alpha-aminoadipate (fungal route): step 3/3. With respect to regulation, inhibited by p-chloromercuribenzoate and iodoacetate by modification of the active site cysteine residue. Inhibited by diethyl pyrocarbonate by modification of histidine residues. Inhibited by pyridoxal 5'-phosphate by modification of an essential lysine residue. Catalyzes the NAD(+)-dependent cleavage of saccharopine to L-lysine and 2-oxoglutarate, the final step in the alpha-aminoadipate (AAA) pathway for lysine biosynthesis. This is Saccharopine dehydrogenase [NAD(+), L-lysine-forming] from Saccharomyces cerevisiae (strain ATCC 204508 / S288c) (Baker's yeast).